The primary structure comprises 71 residues: uncharacterized protein (71 aa).

This is an uncharacterized protein from Vaccinia virus (strain Western Reserve) (VACV).